We begin with the raw amino-acid sequence, 199 residues long: Dephospho-CoA kinase (199 aa).

Residues 3 to 199 (VLGLTGSIGM…AAAKMPRRRD (197 aa)) form the DPCK domain. 11–16 (GMGKST) is an ATP binding site.

It belongs to the CoaE family.

Its subcellular location is the cytoplasm. It catalyses the reaction 3'-dephospho-CoA + ATP = ADP + CoA + H(+). The protein operates within cofactor biosynthesis; coenzyme A biosynthesis; CoA from (R)-pantothenate: step 5/5. Its function is as follows. Catalyzes the phosphorylation of the 3'-hydroxyl group of dephosphocoenzyme A to form coenzyme A. This is Dephospho-CoA kinase from Rhodopseudomonas palustris (strain ATCC BAA-98 / CGA009).